A 693-amino-acid chain; its full sequence is MEFPPLWLCLGFHFLIVEWRSGPGTATAASQGGCKVVDGVADCRGLNLASVPSSLPPHSRMLILDANPLKDLWNHSLQAYPRLENLSLHSCHLDRISHYAFREQGHLRNLVLADNRLSENYKESAAALHTLLGLRRLDLSGNSLTEDMAALMLQNLSSLEVVSLARNTLMRLDDSIFEGLEHLVELDLQRNYIFEIEGGAFDGLTELRRLNLAYNNLPCIVDFSLTQLRFLNVSYNILEWFLAAREEVAFELEILDLSHNQLLFFPLLPQCGKLHTLLLQDNNMGFYRELYNTSSPQEMVAQFLLVDGNVTNITTVNLWEEFSSSDLSALRFLDMSQNQFRHLPDGFLKKTPSLSHLNLNQNCLKMLHIREHEPPGALTELDLSHNQLAELHLAPGLTGSLRNLRVFNLSSNQLLGVPTGLFDNASSITTIDMSHNQISLCPQMVPVDWEGPPSCVDFRNMGSLRSLSLDGCGLKALQDCPFQGTSLTHLDLSSNWGVLNGSISPLWAVAPTLQVLSLRDVGLGSGAAEMDFSAFGNLRALDLSGNSLTSFPKFKGSLALRTLDLRRNSLTALPQRVVSEQPLRGLQTIYLSQNPYDCCGVEGWGALQQHFKTVADLSMVTCNLSSKIVRVVELPEGLPQGCKWEQVDTGLFYLVLILPSCLTLLVACTVVFLTFKKPLLQVIKSRCHWSSIY.

A signal peptide spans 1-19; it reads MEFPPLWLCLGFHFLIVEW. The Extracellular segment spans residues 20 to 651; the sequence is RSGPGTATAA…CKWEQVDTGL (632 aa). An LRRNT domain is found at 29 to 56; the sequence is ASQGGCKVVDGVADCRGLNLASVPSSLP. 10 LRR repeats span residues 58 to 79, 82 to 103, 106 to 127, 133 to 155, 158 to 179, 182 to 203, 206 to 227, 228 to 239, 251 to 272, and 273 to 294; these read HSRM…SLQA, RLEN…AFRE, HLRN…SAAA, GLRR…MLQN, SLEV…IFEG, HLVE…AFDG, ELRR…SLTQ, LRFLNVSYNILE, ELEI…PQCG, and KLHT…YNTS. N-linked (GlcNAc...) asparagine glycosylation is found at Asn-74 and Asn-85. Asn-155 carries an N-linked (GlcNAc...) asparagine glycan. Asn-232 carries N-linked (GlcNAc...) asparagine glycosylation. Asn-292, Asn-309, and Asn-312 each carry an N-linked (GlcNAc...) asparagine glycan. LRR repeat units follow at residues 329 to 350, 353 to 374, 377 to 398, 403 to 424, 427 to 448, 463 to 484, 486 to 507, 512 to 533, 537 to 558, 559 to 580, and 585 to 605; these read ALRF…FLKK, SLSH…EHEP, ALTE…PGLT, NLRV…LFDN, SITT…VPVD, SLRS…PFQG, SLTH…SPLW, TLQV…MDFS, NLRA…KGSL, ALRT…VVSE, and GLQT…EGWG. N-linked (GlcNAc...) asparagine glycans are attached at residues Asn-408 and Asn-424. N-linked (GlcNAc...) asparagine glycosylation is present at Asn-500. The LRRCT domain occupies 606–644; it reads ALQQHFKTVADLSMVTCNLSSKIVRVVELPEGLPQGCKW. N-linked (GlcNAc...) asparagine glycosylation is present at Asn-623. A helical transmembrane segment spans residues 652–672; that stretch reads FYLVLILPSCLTLLVACTVVF. The Cytoplasmic segment spans residues 673 to 693; it reads LTFKKPLLQVIKSRCHWSSIY.

The protein belongs to the LRRC32/LRRC33 family. Interacts with TGFB1; associates via disulfide bonds with the Latency-associated peptide chain (LAP) regulatory chain of TGFB1, leading to regulate activation of TGF-beta-1. Interacts (via LRR repeats) with TLR2, TLR3, TLR4, TLR9 and probably other Toll-like receptors. Interacts with CYBB/NOX2; the interaction is direct. Post-translationally, N-glycosylated. Mainly expressed in cells of hematopoietic origin, such as in immune organs such as lymph nodes, thymus and spleen. Among leukocytes, expressed at higher level in myeloid cell such as macrophages, neutrophils and dendritic cells. Highly expressed in central nervous system-resident macrophages, including microglia and perivascular macrophages.

The protein resides in the cell membrane. It is found in the endoplasmic reticulum membrane. Key regulator of transforming growth factor beta-1 (TGFB1) specifically required for microglia function in the nervous system. Required for activation of latent TGF-beta-1 in macrophages and microglia: associates specifically via disulfide bonds with the Latency-associated peptide (LAP), which is the regulatory chain of TGFB1, and regulates integrin-dependent activation of TGF-beta-1. TGF-beta-1 activation mediated by LRRC33/NRROS is highly localized: there is little spreading of TGF-beta-1 activated from one microglial cell to neighboring microglia, suggesting the existence of localized and selective activation of TGF-beta-1 by LRRC33/NRROS. Indirectly plays a role in Toll-like receptor (TLR) signaling: ability to inhibit TLR-mediated NF-kappa-B activation and cytokine production is probably a consequence of its role in TGF-beta-1 signaling. The chain is Transforming growth factor beta activator LRRC33 from Mus musculus (Mouse).